A 126-amino-acid polypeptide reads, in one-letter code: Probable prefoldin subunit 4 (126 aa).

The protein belongs to the prefoldin subunit beta family. In terms of assembly, heterohexamer of two PFD-alpha type and four PFD-beta type subunits.

In terms of biological role, binds specifically to cytosolic chaperonin (c-CPN) and transfers target proteins to it. Binds to nascent polypeptide chain and promotes folding in an environment in which there are many competing pathways for nonnative proteins. Appears to play a non-essential role. The chain is Probable prefoldin subunit 4 from Caenorhabditis briggsae.